Consider the following 601-residue polypeptide: Glutathione-regulated potassium-efflux system protein KefB (601 aa).

The next 13 membrane-spanning stretches (helical) occupy residues 4-24 (SDFLLAGVLFLFAAVAAVPLA), 29-49 (IGAVLGYLLAGIAIGPWGLGF), 55-75 (EILHFSELGVVFLMFIIGLEL), 87-107 (IFGVGAAQVLLSAALLAGLLM), 115-135 (AAVVGGIGLAMSSTAMALQLM), 152-172 (VLLFQDLAVIPALALVPLLAG), 177-197 (HFDWMKIGMKVLAFVGMLIGG), 207-227 (FIAASGVREVFTAATLLLVLG), 230-250 (LFMDALGLSMALGTFIAGVLL), 268-288 (GLLLGLFFISVGMSLNLGVLY), 291-311 (LLWVVISVVVLVAVKILVLYL), 324-344 (MQFAGVLSQGGEFAFVLFSTA), and 356-376 (ALLLVTVTLSMMTTPLLMKLV). Residues 400–519 (KPQVIVVGFG…AGVTQFSRET (120 aa)) enclose the RCK N-terminal domain.

The protein belongs to the monovalent cation:proton antiporter 2 (CPA2) transporter (TC 2.A.37) family. KefB subfamily. As to quaternary structure, interacts with the regulatory subunit KefG.

The protein localises to the cell inner membrane. In terms of biological role, pore-forming subunit of a potassium efflux system that confers protection against electrophiles. Catalyzes K(+)/H(+) antiport. The chain is Glutathione-regulated potassium-efflux system protein KefB from Escherichia coli (strain SMS-3-5 / SECEC).